The primary structure comprises 208 residues: 3-demethoxyubiquinol 3-hydroxylase (208 aa).

Residues Glu57, Glu87, His90, Glu139, Glu171, and His174 each coordinate Fe cation.

Belongs to the COQ7 family. The cofactor is Fe cation.

It is found in the cell membrane. It carries out the reaction a 5-methoxy-2-methyl-3-(all-trans-polyprenyl)benzene-1,4-diol + AH2 + O2 = a 3-demethylubiquinol + A + H2O. The protein operates within cofactor biosynthesis; ubiquinone biosynthesis. Its function is as follows. Catalyzes the hydroxylation of 2-nonaprenyl-3-methyl-6-methoxy-1,4-benzoquinol during ubiquinone biosynthesis. This Burkholderia pseudomallei (strain 668) protein is 3-demethoxyubiquinol 3-hydroxylase.